The following is an 883-amino-acid chain: Translation initiation factor IF-2 (883 aa).

The segment covering 32-45 (NDLNGKNNSNSSIN) has biased composition (polar residues). Disordered stretches follow at residues 32–216 (NDLN…QNKY) and 251–275 (RKLG…AETE). The segment covering 46–62 (LDKHNNKVEYSQNRDNR) has biased composition (basic and acidic residues). Polar residues predominate over residues 75 to 216 (GGYSQNRDNR…VGKNTSQNKY (142 aa)). The segment covering 251-260 (RKLGEKKKQQ) has biased composition (basic and acidic residues). The tr-type G domain occupies 381 to 554 (EKPPVITIMG…DMMLLKANPS (174 aa)). The tract at residues 390–397 (GHVDHGKT) is G1. Residue 390 to 397 (GHVDHGKT) coordinates GTP. The G2 stretch occupies residues 415-419 (GITQH). The tract at residues 436–439 (DTPG) is G3. GTP contacts are provided by residues 436–440 (DTPGH) and 490–493 (NKID). A G4 region spans residues 490–493 (NKID). Residues 526 to 528 (SAL) form a G5 region.

The protein belongs to the TRAFAC class translation factor GTPase superfamily. Classic translation factor GTPase family. IF-2 subfamily.

The protein resides in the cytoplasm. In terms of biological role, one of the essential components for the initiation of protein synthesis. Protects formylmethionyl-tRNA from spontaneous hydrolysis and promotes its binding to the 30S ribosomal subunits. Also involved in the hydrolysis of GTP during the formation of the 70S ribosomal complex. This Borrelia garinii subsp. bavariensis (strain ATCC BAA-2496 / DSM 23469 / PBi) (Borreliella bavariensis) protein is Translation initiation factor IF-2.